The primary structure comprises 179 residues: Peptide deformylase 2 (179 aa).

Fe cation is bound by residues Cys104 and His146. Glu147 is a catalytic residue. His150 contacts Fe cation.

Belongs to the polypeptide deformylase family. The cofactor is Fe(2+).

The enzyme catalyses N-terminal N-formyl-L-methionyl-[peptide] + H2O = N-terminal L-methionyl-[peptide] + formate. Functionally, removes the formyl group from the N-terminal Met of newly synthesized proteins. Requires at least a dipeptide for an efficient rate of reaction. N-terminal L-methionine is a prerequisite for activity but the enzyme has broad specificity at other positions. The polypeptide is Peptide deformylase 2 (Streptomyces coelicolor (strain ATCC BAA-471 / A3(2) / M145)).